The primary structure comprises 377 residues: S-adenosylmethionine decarboxylase proenzyme 2 (377 aa).

Active-site residues include E24 and E27. Catalysis depends on S84, which acts as the Schiff-base intermediate with substrate; via pyruvic acid. S84 is modified (pyruvic acid (Ser); by autocatalysis). C98 (proton donor; for catalytic activity) is an active-site residue. Catalysis depends on proton acceptor; for processing activity residues S246 and H259.

It belongs to the eukaryotic AdoMetDC family. Pyruvate is required as a cofactor. In terms of processing, is synthesized initially as an inactive proenzyme. Formation of the active enzyme involves a self-maturation process in which the active site pyruvoyl group is generated from an internal serine residue via an autocatalytic post-translational modification. Two non-identical subunits are generated from the proenzyme in this reaction, and the pyruvate is formed at the N-terminus of the alpha chain, which is derived from the carboxyl end of the proenzyme. The post-translation cleavage follows an unusual pathway, termed non-hydrolytic serinolysis, in which the side chain hydroxyl group of the serine supplies its oxygen atom to form the C-terminus of the beta chain, while the remainder of the serine residue undergoes an oxidative deamination to produce ammonia and the pyruvoyl group blocking the N-terminus of the alpha chain.

It carries out the reaction S-adenosyl-L-methionine + H(+) = S-adenosyl 3-(methylsulfanyl)propylamine + CO2. The protein operates within amine and polyamine biosynthesis; S-adenosylmethioninamine biosynthesis; S-adenosylmethioninamine from S-adenosyl-L-methionine: step 1/1. The sequence is that of S-adenosylmethionine decarboxylase proenzyme 2 (SAMDC2) from Dianthus caryophyllus (Carnation).